Reading from the N-terminus, the 143-residue chain is MALSLDILMSVTMVTAVLTTVNAEYKDSRLDSRQLPANFPMCQHRQLCAVASRATNNLRVYCRCSDDTICPISDDHHAIYPNTAYICQHVNSYLDPCVDITIPAIVTTSEIYVINCRCDTYQWPPVGGKVYCESLSSRMFKLF.

The first 23 residues, 1–23, serve as a signal peptide directing secretion; the sequence is MALSLDILMSVTMVTAVLTTVNA. A propeptide spanning residues 24-32 is cleaved from the precursor; the sequence is EYKDSRLDS.

Contains 4 disulfide bonds. In terms of tissue distribution, expressed by the venom duct.

It localises to the secreted. This Gemmula speciosa (Splendid gem-turris) protein is Turripeptide VIII-01.